A 218-amino-acid polypeptide reads, in one-letter code: Riboflavin synthase (218 aa).

Lumazine-binding repeat units lie at residues 1–97 (MFTG…FGGH) and 98–194 (IVSG…ERLL). 2,4-dihydroxypteridine contacts are provided by residues 4–6 (GII), 48–50 (CLT), 62–67 (DLSIET), 101–103 (GHV), Lys-136, 145–147 (SLT), and 159–164 (TIVPHT).

As to quaternary structure, homotrimer.

The enzyme catalyses 2 6,7-dimethyl-8-(1-D-ribityl)lumazine + H(+) = 5-amino-6-(D-ribitylamino)uracil + riboflavin. Its pathway is cofactor biosynthesis; riboflavin biosynthesis; riboflavin from 2-hydroxy-3-oxobutyl phosphate and 5-amino-6-(D-ribitylamino)uracil: step 2/2. Catalyzes the dismutation of two molecules of 6,7-dimethyl-8-ribityllumazine, resulting in the formation of riboflavin and 5-amino-6-(D-ribitylamino)uracil. In Photobacterium phosphoreum, this protein is Riboflavin synthase.